The primary structure comprises 197 residues: uncharacterized protein (197 aa).

The segment covering Met-1–Ser-10 has biased composition (polar residues). Disordered stretches follow at residues Met-1 to Ser-46 and Leu-54 to Arg-73. Basic and acidic residues predominate over residues Leu-18–Glu-37. A compositionally biased stretch (polar residues) spans Asp-58–Pro-69. The next 2 membrane-spanning stretches (helical) occupy residues Asn-83–Trp-105 and Ala-120–Leu-142.

It belongs to the WTF family.

The protein resides in the endoplasmic reticulum membrane. This is an uncharacterized protein from Schizosaccharomyces pombe (strain 972 / ATCC 24843) (Fission yeast).